The chain runs to 705 residues: Frizzled-4 (705 aa).

The first 22 residues, 1-22, serve as a signal peptide directing secretion; the sequence is MKPTCILCLLVVILLHPRISKS. Residues 21-37 are compositionally biased toward low complexity; the sequence is KSSTSGNPSASSSSSSP. A disordered region spans residues 21–40; it reads KSSTSGNPSASSSSSSPPEI. The Extracellular portion of the chain corresponds to 23 to 233; sequence STSGNPSASS…FTPAEKHLAE (211 aa). In terms of domain architecture, FZ spans 41 to 163; it reads PAFRQCETIR…NNHETMCMEG (123 aa). 5 disulfides stabilise this stretch: cysteine 46–cysteine 107, cysteine 54–cysteine 100, cysteine 91–cysteine 130, cysteine 119–cysteine 160, and cysteine 123–cysteine 147. An N-linked (GlcNAc...) asparagine glycan is attached at asparagine 60. Residues 234–254 form a helical membrane-spanning segment; the sequence is IWVSTWAYAALGLALVATVCL. The Cytoplasmic portion of the chain corresponds to 255–270; the sequence is LASDGSRLASAKWSRL. The helical transmembrane segment at 271 to 291 threads the bilayer; it reads LSPLIWCHNMVTLGWAVRFMV. The Extracellular segment spans residues 292–322; the sequence is GRTGTACGTDPQAPNESLLTVDGLSNASCAS. N-linked (GlcNAc...) asparagine glycans are attached at residues asparagine 306 and asparagine 317. A helical transmembrane segment spans residues 323-343; sequence VFLMRYYFGMAACAWWAVLCL. Residues 344–386 are Cytoplasmic-facing; sequence GWHRDIRRHSPDSKGHVVIPSNFGGSPAKRNSAKTAQQDLTQN. A helical membrane pass occupies residues 387–407; it reads NFVCFVAWGLPAFQTSAVIVA. Residues 408–430 are Extracellular-facing; it reads RFVDADELLGACFVGNQSDKALQ. Asparagine 423 carries an N-linked (GlcNAc...) asparagine glycan. Residues 431 to 451 traverse the membrane as a helical segment; it reads ILVATPVFCYWIFGSMNLISG. Residues 452-483 lie on the Cytoplasmic side of the membrane; that stretch reads YLVHCRTKEILRNSNALSVQQQLQQLSAHSSS. A helical transmembrane segment spans residues 484–504; sequence GIGIFLFIYGLACAMLLLAVI. The Extracellular portion of the chain corresponds to 505 to 529; it reads YEFANIDVWLGSGDTNTPLWPFLLR. Residues 530 to 550 form a helical membrane-spanning segment; that stretch reads AFMELMLGICCFAWVLGPSIS. The Cytoplasmic portion of the chain corresponds to 551–705; that stretch reads TLYKRQVSNG…LQQYGNETLL (155 aa). The interval 635 to 681 is disordered; that stretch reads RSVHHQQRHSPHHHHHQQQQHHQFHPHHNHQHHSTSSHRLYYPPGSY. The span at 636 to 670 shows a compositional bias: basic residues; that stretch reads SVHHQQRHSPHHHHHQQQQHHQFHPHHNHQHHSTS. Positions 703–705 match the PDZ-binding motif; that stretch reads TLL.

It belongs to the G-protein coupled receptor Fz/Smo family.

The protein resides in the membrane. In terms of biological role, receptor for Wnt proteins. Most of frizzled receptors are coupled to the beta-catenin canonical signaling pathway, which leads to the activation of disheveled proteins, inhibition of GSK-3 kinase, nuclear accumulation of beta-catenin and activation of Wnt target genes. A second signaling pathway involving PKC and calcium fluxes has been seen for some family members, but it is not yet clear if it represents a distinct pathway or if it can be integrated in the canonical pathway, as PKC seems to be required for Wnt-mediated inactivation of GSK-3 kinase. Both pathways seem to involve interactions with G-proteins. May be involved in transduction and intercellular transmission of polarity information during tissue morphogenesis and/or in differentiated tissues. Required to coordinate the cytoskeletons of epidermal cells to produce a parallel array of cuticular hairs and bristles. The chain is Frizzled-4 (fz4) from Drosophila melanogaster (Fruit fly).